Here is a 642-residue protein sequence, read N- to C-terminus: Threonine--tRNA ligase (642 aa).

The TGS domain occupies 1–63 (MSEIVVTLPD…TDDCELVIVT (63 aa)). Positions 242–533 (DHRKLGQELD…LIEHFDGNFP (292 aa)) are catalytic. C334, H385, and H510 together coordinate Zn(2+).

The protein belongs to the class-II aminoacyl-tRNA synthetase family. In terms of assembly, homodimer. Zn(2+) is required as a cofactor.

The protein resides in the cytoplasm. The enzyme catalyses tRNA(Thr) + L-threonine + ATP = L-threonyl-tRNA(Thr) + AMP + diphosphate + H(+). Catalyzes the attachment of threonine to tRNA(Thr) in a two-step reaction: L-threonine is first activated by ATP to form Thr-AMP and then transferred to the acceptor end of tRNA(Thr). This Natronomonas pharaonis (strain ATCC 35678 / DSM 2160 / CIP 103997 / JCM 8858 / NBRC 14720 / NCIMB 2260 / Gabara) (Halobacterium pharaonis) protein is Threonine--tRNA ligase.